A 147-amino-acid chain; its full sequence is MVHLTDAEKATVSGLWGKVNADNVGAEALGRLLVVYPWTQRYFSKFGDLSSASAIMGNPQVKAHGKKVINAFNDGLKHLDNLKGTFAHLSELHCDKLHVDPENFRLLGNMIVIVLGHHLGKEFTPCAQAAFQKVVAGVASALAHKYH.

Val-2 is subject to N-acetylvaline. The Globin domain occupies 3–147; sequence HLTDAEKATV…VASALAHKYH (145 aa). Ser-13 bears the Phosphoserine mark. Lys-18 is subject to N6-succinyllysine. Residues Ser-51 and Ser-53 each carry the phosphoserine modification. Heme b contacts are provided by His-64 and His-93. Position 105 is an asymmetric dimethylarginine (Arg-105). Phosphothreonine is present on Thr-124. Phosphoserine; in variant Ser-126 is present on Cys-126.

Belongs to the globin family. In terms of assembly, heterotetramer of two alpha chains and two beta chains. In terms of tissue distribution, red blood cells.

Functionally, involved in oxygen transport from the lung to the various peripheral tissues. The sequence is that of Hemoglobin subunit beta-2 from Rattus norvegicus (Rat).